Here is a 284-residue protein sequence, read N- to C-terminus: Homeobox-leucine zipper protein HAT4 (284 aa).

Polar residues predominate over residues 48–59 (ESFTSSVPNSDS). The tract at residues 48–132 (ESFTSSVPNS…DGDNSRKKLR (85 aa)) is disordered. The span at 89–100 (VSSPNSTVSSST) shows a compositional bias: low complexity. The homeobox DNA-binding region spans 126–185 (NSRKKLRLSKDQSAILEETFKDHSTLNPKQKQALAKQLGLRARQVEVWFQNRRARTKLKQ). The leucine-zipper stretch occupies residues 193-214 (LRRCCENLTEENRRLQKEVTEL).

Belongs to the HD-ZIP homeobox family. Class II subfamily. As to quaternary structure, interacts with DNA as homodimer. In terms of tissue distribution, predominantly expressed in leaves and stems.

The protein localises to the nucleus. Its function is as follows. Probable transcription factor involved in the negative regulation of cell elongation and specific cell proliferation processes such as lateral root formation and secondary growth of the vascular system. Acts as a mediator of the red/far-red light effects on leaf cell expansion in the shading response. Binds to the DNA sequence 5'-CAAT[GC]ATTG-3'. Negatively regulates its own expression. The polypeptide is Homeobox-leucine zipper protein HAT4 (HAT4) (Arabidopsis thaliana (Mouse-ear cress)).